The primary structure comprises 85 residues: Electron transfer flavoprotein regulatory factor 1 homolog (85 aa).

This sequence belongs to the complex I LYR family. Highly expressed in the larval fat body.

The protein resides in the mitochondrion. Acts as a regulator of the electron transfer flavoprotein by promoting the removal of flavin from the ETF holoenzyme. May act with the ETF complex to coordinate lipid homeostasis in the fat body in response to stage-specific demands. This Drosophila melanogaster (Fruit fly) protein is Electron transfer flavoprotein regulatory factor 1 homolog.